The following is a 583-amino-acid chain: Ankyrin repeat-containing protein NPR4 (583 aa).

ANK repeat units follow at residues 68-97, 119-148, 154-183, 188-218, 223-252, 257-286, and 291-321; these read HNDT…AAVA, AGET…AEGV, SGYD…LLAK, ANTS…GLVE, NGKN…QLAR, KGQT…AIVM, and NGNT…HVNA. The next 4 helical transmembrane spans lie at 414-434, 452-472, 492-512, and 518-538; these read VTVV…TVPG, IFFI…VVQI, LMWL…YIVL, and WAAL…LGTM.

The protein localises to the cell membrane. In terms of biological role, involved in salt stress tolerance. In Oryza sativa subsp. japonica (Rice), this protein is Ankyrin repeat-containing protein NPR4.